An 855-amino-acid chain; its full sequence is Potassium transporter 13 (855 aa).

The tract at residues 1 to 67 is disordered; it reads MFHVEEESSG…EMDSDEEDDN (67 aa). At 1–105 the chain is on the cytoplasmic side; the sequence is MFHVEEESSG…EIEDTGIGKK (105 aa). The segment covering 36-51 has biased composition (acidic residues); that stretch reads EKDDYEVNEDYDDDGY. The chain crosses the membrane as a helical span at residues 106–126; it reads LILALQTLGVVFGDIGTSPLY. Residues 127–142 lie on the Extracellular side of the membrane; sequence TFTVMFRRSPINDKED. A helical membrane pass occupies residues 143–163; that stretch reads IIGALSLVIYTLILIPLVKYV. Topologically, residues 164–233 are cytoplasmic; sequence HFVLWANDDG…RLEASMALKK (70 aa). Residues 234 to 254 traverse the membrane as a helical segment; that stretch reads LLLILVLAGTAMVIADAVVTP. Topologically, residues 255-268 are extracellular; that stretch reads AMSVMSAIGGLKVG. The helical transmembrane segment at 269–289 threads the bilayer; it reads VGVIEQDQVVVISVSFLVILF. Over 290–298 the chain is Cytoplasmic; it reads SVQKYGTSK. The helical transmembrane segment at 299–319 threads the bilayer; sequence LGLVLGPALLLWFFCLAGIGI. Topologically, residues 320–346 are extracellular; sequence YNLVKYDSSVFKAFNPAYIYFFFKRNS. The helical transmembrane segment at 347–367 threads the bilayer; it reads VNAWYALGGCVLCATGSEAMF. The Cytoplasmic portion of the chain corresponds to 368–379; that stretch reads ADLSYFSVHSIQ. Residues 380-400 traverse the membrane as a helical segment; sequence LTFILLVLPCLLLGYLGQAAY. The Extracellular segment spans residues 401-415; it reads LSENFSAAGDAFFSS. Residue Asn-404 is glycosylated (N-linked (GlcNAc...) asparagine). A helical transmembrane segment spans residues 416–436; the sequence is VPSSLFWPVFLISNVAALIAS. The Cytoplasmic portion of the chain corresponds to 437–467; that stretch reads RAMTTATFTCIKQSIALGCFPRLKIIHTSKK. The chain crosses the membrane as a helical span at residues 468–488; the sequence is FIGQIYIPVLNWSLLVVCLIV. At 489-503 the chain is on the extracellular side; that stretch reads VCSTSNIFAIGNAYG. Residues 504–524 form a helical membrane-spanning segment; it reads IAELGIMMTTTILVTLIMLLI. Topologically, residues 525–528 are cytoplasmic; it reads WQTN. A helical membrane pass occupies residues 529–549; the sequence is IIVVSMFAIVSLIVELVFFSS. Residues 550–553 lie on the Extracellular side of the membrane; it reads VCSS. A helical transmembrane segment spans residues 554 to 574; that stretch reads VADGSWIILVFATIMFLIMFV. Topologically, residues 575-855 are cytoplasmic; sequence WNYGSKLKYE…LMQVGMTYMV (281 aa). A Phosphoserine modification is found at Ser-766.

Belongs to the HAK/KUP transporter (TC 2.A.72.3) family.

Its subcellular location is the cell membrane. Its function is as follows. Probable potassium transporter. This chain is Potassium transporter 13 (POT13), found in Arabidopsis thaliana (Mouse-ear cress).